The following is a 1935-amino-acid chain: Myosin-7 (1935 aa).

Residues 32–81 (DLKKDVFVPDDKQEFVKAKIVSREGGKVTAETEYGKTVTVKEDQVMQQNP) enclose the Myosin N-terminal SH3-like domain. The 694-residue stretch at 85–778 (DKIEDMAMLT…LLGLLEEMRD (694 aa)) folds into the Myosin motor domain. At Lys-129 the chain carries N6,N6,N6-trimethyllysine. 178–185 (GESGAGKT) contributes to the ATP binding site. Thr-378 is modified (phosphothreonine). Actin-binding stretches follow at residues 655–677 (LNKL…IPNE) and 757–771 (KFGH…GLLG). Residues 781–810 (LSRIITRIQAQSRGVLARMEYKKLLERRDS) form the IQ domain. Residues 839–1935 (LLKSAEREKE…DIGTKGLNEE (1097 aa)) adopt a coiled-coil conformation. Phosphoserine is present on residues Ser-1137 and Ser-1269. A Phosphothreonine modification is found at Thr-1282. A Phosphotyrosine modification is found at Tyr-1308. The residue at position 1309 (Thr-1309) is a Phosphothreonine. A Phosphoserine modification is found at Ser-1510. Thr-1513 carries the phosphothreonine modification. A disordered region spans residues 1907–1935 (EERADIAESQVNKLRAKSRDIGTKGLNEE). Over residues 1923 to 1935 (KSRDIGTKGLNEE) the composition is skewed to basic and acidic residues.

This sequence belongs to the TRAFAC class myosin-kinesin ATPase superfamily. Myosin family. In terms of assembly, muscle myosin is a hexameric protein that consists of 2 heavy chain subunits (MHC), 2 alkali light chain subunits (MLC) and 2 regulatory light chain subunits (MLC-2). Interacts with ECPAS. Interacts (via C-terminus) with LRRC39. In terms of tissue distribution, both wild type and variant Gln-403 are detected in skeletal muscle (at protein level).

The protein resides in the cytoplasm. It is found in the myofibril. The protein localises to the sarcomere. Its function is as follows. Myosins are actin-based motor molecules with ATPase activity essential for muscle contraction. Forms regular bipolar thick filaments that, together with actin thin filaments, constitute the fundamental contractile unit of skeletal and cardiac muscle. This chain is Myosin-7 (MYH7), found in Homo sapiens (Human).